Here is a 141-residue protein sequence, read N- to C-terminus: Vesicle-associated membrane protein 4 (141 aa).

Residues Met-1 to Asp-51 are disordered. Topologically, residues Met-1–Lys-115 are cytoplasmic. Residues Ser-17 and Ser-30 each carry the phosphoserine modification. Residues Lys-52–Arg-112 form the v-SNARE coiled-coil homology domain. A helical; Anchor for type IV membrane protein membrane pass occupies residues Ile-116–Val-136. The Vesicular portion of the chain corresponds to Val-137–Thr-141.

This sequence belongs to the synaptobrevin family. Identified in a complex containing STX6, STX12, VAMP4 and VTI1A. Interacts with BAIAP3; this interaction is increased in the presence of calcium.

Its subcellular location is the golgi apparatus. The protein resides in the trans-Golgi network membrane. In terms of biological role, involved in the pathway that functions to remove an inhibitor (probably synaptotagmin-4) of calcium-triggered exocytosis during the maturation of secretory granules. May be a marker for this sorting pathway that is critical for remodeling the secretory response of granule. This chain is Vesicle-associated membrane protein 4 (VAMP4), found in Bos taurus (Bovine).